Consider the following 223-residue polypeptide: Ubiquitin carboxyl-terminal hydrolase isozyme L1 (223 aa).

Met-1 carries the N-acetylmethionine modification. One can recognise a UCH catalytic domain in the interval 2–221; the sequence is QLKPMEINPE…VRFSAVALCK (220 aa). The interval 5-10 is interaction with ubiquitin; the sequence is PMEINP. Catalysis depends on Cys-90, which acts as the Nucleophile. The residue at position 125 (Ser-125) is a Phosphoserine. Catalysis depends on His-161, which acts as the Proton donor. Residues 211–216 form an interaction with ubiquitin region; sequence EVRFSA. A lipid anchor (S-farnesyl cysteine) is attached at Cys-220. A propeptide spans 221 to 223 (removed in mature form); that stretch reads KAA.

The protein belongs to the peptidase C12 family. As to quaternary structure, monomer. Homodimer. Interacts with COPS5 and SNCA. Post-translationally, O-glycosylated.

Its subcellular location is the cytoplasm. The protein localises to the endoplasmic reticulum membrane. It carries out the reaction Thiol-dependent hydrolysis of ester, thioester, amide, peptide and isopeptide bonds formed by the C-terminal Gly of ubiquitin (a 76-residue protein attached to proteins as an intracellular targeting signal).. Its function is as follows. Ubiquitin-protein hydrolase involved both in the processing of ubiquitin precursors and of ubiquitinated proteins. This enzyme is a thiol protease that recognizes and hydrolyzes a peptide bond at the C-terminal glycine of ubiquitin. Also binds to free monoubiquitin and may prevent its degradation in lysosomes. The homodimer may have ATP-independent ubiquitin ligase activity. The sequence is that of Ubiquitin carboxyl-terminal hydrolase isozyme L1 (UCHL1) from Equus caballus (Horse).